Consider the following 63-residue polypeptide: Large ribosomal subunit protein bL35 (63 aa).

The protein belongs to the bacterial ribosomal protein bL35 family.

The protein is Large ribosomal subunit protein bL35 of Sulfurimonas denitrificans (strain ATCC 33889 / DSM 1251) (Thiomicrospira denitrificans (strain ATCC 33889 / DSM 1251)).